Here is a 178-residue protein sequence, read N- to C-terminus: DELTA-miturgitoxin-Cp3a (178 aa).

An N-terminal signal peptide occupies residues Met1–Ser18. Positions Glu19–Arg46 are excised as a propeptide. The short motif at Glu43–Arg46 is the Processing quadruplet motif element. Disulfide bonds link Cys48–Cys63, Cys55–Cys72, Cys62–Cys86, Cys74–Cys84, Cys113–Cys128, Cys120–Cys137, Cys127–Cys155, and Cys139–Cys153.

This sequence belongs to the spider toxin CSTX family. Double-CSTX subfamily. Cleavage of the propeptide depends on the processing quadruplet motif (XXXR, with at least one of X being E). In terms of tissue distribution, expressed by the venom gland.

The protein resides in the secreted. Spider venom toxin that exhibits cytolytic activity by forming an alpha-helix across the membrane. Lethal to insect larvae. In Cheiracanthium punctorium (Yellow sac spider), this protein is DELTA-miturgitoxin-Cp3a.